The primary structure comprises 564 residues: Protein NRT1/ PTR FAMILY 5.16 (564 aa).

A run of 2 helical transmembrane segments spans residues 49–69 (FAYF…LGQS) and 80–100 (WSGT…AYLG). T104 carries the phosphothreonine modification. Helical transmembrane passes span 110 to 130 (LIYI…LMGL), 145 to 165 (FFWV…GQGG), 192 to 212 (FFNW…IVVV), 220 to 240 (WALG…LFLF), 327 to 347 (IPIW…ATFF), 358 to 378 (ILPG…LSIF), 408 to 428 (IGAG…VEMK), 450 to 470 (IWWF…SLVG), 486 to 506 (IGLA…GFLI), and 533 to 553 (YFYW…LLLS).

Belongs to the major facilitator superfamily. Proton-dependent oligopeptide transporter (POT/PTR) (TC 2.A.17) family. In terms of tissue distribution, expressed in shoots and roots.

Its subcellular location is the membrane. In Arabidopsis thaliana (Mouse-ear cress), this protein is Protein NRT1/ PTR FAMILY 5.16 (NPF5.16).